Consider the following 378-residue polypeptide: Deoxyhypusine synthase (378 aa).

Residues 107–111, 133–135, Glu-139, and Asp-253 each bind NAD(+); these read SNLIS and SAG. Spermidine is bound at residue 138–139; sequence EE. Asp-258 is a spermidine binding site. Gly-300 serves as a coordination point for NAD(+). Residue His-305 participates in spermidine binding. Position 325 to 326 (325 to 326) interacts with NAD(+); the sequence is TG. Spermidine is bound by residues 331 to 333 and 340 to 346; these read GSD and EAISWGK. The Nucleophile role is filled by Lys-346. Position 359–360 (359–360) interacts with NAD(+); the sequence is DA.

The protein belongs to the deoxyhypusine synthase family. NAD(+) serves as cofactor.

The enzyme catalyses [eIF5A protein]-L-lysine + spermidine = [eIF5A protein]-deoxyhypusine + propane-1,3-diamine. Its pathway is protein modification; eIF5A hypusination. Functionally, catalyzes the NAD-dependent oxidative cleavage of spermidine and the subsequent transfer of the butylamine moiety of spermidine to the epsilon-amino group of a specific lysine residue of the eIF-5A precursor protein to form the intermediate deoxyhypusine residue. The chain is Deoxyhypusine synthase (DYS1) from Debaryomyces hansenii (strain ATCC 36239 / CBS 767 / BCRC 21394 / JCM 1990 / NBRC 0083 / IGC 2968) (Yeast).